Consider the following 839-residue polypeptide: Transcription regulator protein BACH2 (839 aa).

Residues 37–103 form the BTB domain; it reads CDVTLIVERK…AYTAKLLLSR (67 aa). 2 disordered regions span residues 150–170 and 247–331; these read QRPQEDHGNSAGEEEEEEETM and HGTS…LDRS. A compositionally biased stretch (acidic residues) spans 161-170; the sequence is GEEEEEEETM. A compositionally biased stretch (polar residues) spans 247–263; sequence HGTSGFASTFSEDSPGN. Positions 297 to 312 are enriched in basic and acidic residues; it reads TDIKDRPGDVEMDRKQ. Phosphoserine is present on S314. Residues 321–331 are compositionally biased toward low complexity; sequence TPTGAACLDRS. Residues K381 and K420 each participate in a glycyl lysine isopeptide (Lys-Gly) (interchain with G-Cter in SUMO2) cross-link. Residue S520 is modified to Phosphoserine. The segment at 582–609 is disordered; it reads QSYGTNSSDESGSFSEADSESCPVQDRG. Residues 583 to 597 show a composition bias toward polar residues; the sequence is SYGTNSSDESGSFSE. The bZIP domain maps to 645–708; sequence FIHDIRRRSK…GELLDNFSCL (64 aa). The interval 650 to 666 is basic motif; that stretch reads RRRSKNRIAAQRCRKRK. A leucine-zipper region spans residues 670-677; sequence IQNLECEI. A disordered region spans residues 778-813; the sequence is PWVPSNTSENCTSGRRLEGSDPGTFSERGPPLEARS. Residues 781 to 790 show a composition bias toward polar residues; sequence PSNTSENCTS. A Nuclear export signal motif is present at residues 819–839; the sequence is DFCQEMTEKCTTDEQPRKDYA.

Belongs to the bZIP family. CNC subfamily. Homodimer; disulfide-linked. Heterodimer of BACH2 and Maf-related transcription factors. Post-translationally, the reversible disulfide bond may provide a mechanism to regulate the activity in oxidative stress responses. Phosphorylation at Ser-520 downstream of the PI-3K pathway promotes nuclear export. Detected in brain and spleen.

It is found in the cytoplasm. The protein localises to the nucleus. In terms of biological role, transcriptional regulator that acts as a repressor or activator. Binds to Maf recognition elements (MARE). Plays an important role in coordinating transcription activation and repression by MAFK. Induces apoptosis in response to oxidative stress through repression of the antiapoptotic factor HMOX1. Positively regulates the nuclear import of actin. Is a key regulator of adaptive immunity, crucial for the maintenance of regulatory T-cell function and B-cell maturation. This chain is Transcription regulator protein BACH2 (Bach2), found in Mus musculus (Mouse).